We begin with the raw amino-acid sequence, 358 residues long: Peptide chain release factor 1 (358 aa).

An N5-methylglutamine modification is found at Gln-236.

Belongs to the prokaryotic/mitochondrial release factor family. Methylated by PrmC. Methylation increases the termination efficiency of RF1.

It is found in the cytoplasm. Functionally, peptide chain release factor 1 directs the termination of translation in response to the peptide chain termination codons UAG and UAA. The sequence is that of Peptide chain release factor 1 from Corynebacterium efficiens (strain DSM 44549 / YS-314 / AJ 12310 / JCM 11189 / NBRC 100395).